The primary structure comprises 400 residues: MYSGNRSGDQGYWEDGAGAEGAAPAGTRSPAPLFSPTAYERLALLLGCLALLGVGGNLLVLLLYSKFPRLRTPTHLFLVNLSLGDLLVSLFGVTFTFASCLRNGWVWDAVGCAWDGFSGSLFGFVSITTLTVLAYERYIRVVHARVINFSWAWRAITYIWLYSLAWAGAPLLGWNRYILDIHGLGCTVDWRSKDANDSSFVLFLFLGCLVVPVGIIAHCYGHILYSVRMLRCVEDLQTIQVIKMLRYEKKVAKMCFLMAFVFLTCWMPYIVTRFLVVNGYGHLVTPTVSIVSYLFAKSSTVYNPVIYIFMNRKFRRSLLQLLCFRLLRCQRPAKNLPAAESEMHIRPIVMSQKDGDRPKKKVTFNSSSIIFIITSDESLSVEDSDRSSASKVDVIQVRPL.

Topologically, residues 1-38 (MYSGNRSGDQGYWEDGAGAEGAAPAGTRSPAPLFSPTA) are extracellular. A glycan (N-linked (GlcNAc...) asparagine) is linked at Asn-5. Residues 39–63 (YERLALLLGCLALLGVGGNLLVLLL) form a helical membrane-spanning segment. At 64 to 75 (YSKFPRLRTPTH) the chain is on the cytoplasmic side. A helical membrane pass occupies residues 76–100 (LFLVNLSLGDLLVSLFGVTFTFASC). Topologically, residues 101-115 (LRNGWVWDAVGCAWD) are extracellular. Residues Cys-112 and Cys-186 are joined by a disulfide bond. The chain crosses the membrane as a helical span at residues 116 to 135 (GFSGSLFGFVSITTLTVLAY). At 136-151 (ERYIRVVHARVINFSW) the chain is on the cytoplasmic side. A helical transmembrane segment spans residues 152-175 (AWRAITYIWLYSLAWAGAPLLGWN). Topologically, residues 176-199 (RYILDIHGLGCTVDWRSKDANDSS) are extracellular. N-linked (GlcNAc...) asparagine glycosylation is present at Asn-196. The helical transmembrane segment at 200–227 (FVLFLFLGCLVVPVGIIAHCYGHILYSV) threads the bilayer. Residues 228-253 (RMLRCVEDLQTIQVIKMLRYEKKVAK) are Cytoplasmic-facing. Residues 254 to 277 (MCFLMAFVFLTCWMPYIVTRFLVV) traverse the membrane as a helical segment. The Extracellular portion of the chain corresponds to 278–285 (NGYGHLVT). A helical transmembrane segment spans residues 286-310 (PTVSIVSYLFAKSSTVYNPVIYIFM). Lys-297 is modified (N6-(retinylidene)lysine). The Cytoplasmic portion of the chain corresponds to 311–400 (NRKFRRSLLQ…KVDVIQVRPL (90 aa)). Cys-323 carries S-palmitoyl cysteine lipidation.

This sequence belongs to the G-protein coupled receptor 1 family. Opsin subfamily. As to quaternary structure, interacts with MC1R; the interaction results in a decrease in MC1R-mediated cAMP signaling and ultimately a decrease in melanin production in melanocytes. In terms of tissue distribution, expressed in the eye (at protein level). Expressed in tracheal airway smooth muscle. Expressed in brown adipocyte tissue; expression becomes more abundant during differentiation. Strongly expressed in brain. Highly expressed in the preoptic area and paraventricular nucleus of the hypothalamus. Shows highly patterned expression in other regions of the brain, being enriched in selected regions of the cerebral cortex, cerebellar Purkinje cells, a subset of striatal neurons, selected thalamic nuclei, and a subset of interneurons in the ventral horn of the spinal cord.

It localises to the cell membrane. Its subcellular location is the cytoplasm. Its function is as follows. G-protein coupled receptor which selectively activates G proteins via ultraviolet A (UVA) light-mediated activation in the skin. Binds both 11-cis retinal and all-trans retinal. Regulates melanogenesis in melanocytes via inhibition of alpha-MSH-induced MC1R-mediated cAMP signaling, modulation of calcium flux, regulation of CAMK2 phosphorylation, and subsequently phosphorylation of CREB, p38, ERK and MITF in response to blue light. Plays a role in melanocyte survival through regulation of intracellular calcium levels and subsequent BCL2/RAF1 signaling. Additionally regulates apoptosis via cytochrome c release and subsequent activation of the caspase cascade. Required for TYR and DCT blue light-induced complex formation in melanocytes. Involved in keratinocyte differentiation in response to blue-light. Required for the UVA-mediated induction of calcium and mitogen-activated protein kinase signaling resulting in the expression of MMP1, MMP2, MMP3, MMP9 and TIMP1 in dermal fibroblasts. Plays a role in light-mediated glucose uptake, mitochondrial respiration and fatty acid metabolism in brown adipocyte tissues. May be involved in photorelaxation of airway smooth muscle cells, via blue-light dependent GPCR signaling pathways. This chain is Opsin-3 (Opn3), found in Mus musculus (Mouse).